We begin with the raw amino-acid sequence, 340 residues long: Conidiation-specific protein 13 (340 aa).

Residues 313 to 340 are disordered; sequence AEAAAGISSGKPAADRKTKGKKGTKFRV. Over residues 330–340 the composition is skewed to basic residues; it reads TKGKKGTKFRV.

The sequence is that of Conidiation-specific protein 13 (con-13) from Neurospora crassa (strain ATCC 24698 / 74-OR23-1A / CBS 708.71 / DSM 1257 / FGSC 987).